Reading from the N-terminus, the 406-residue chain is GTPase Obg (406 aa).

The 159-residue stretch at 1-159 (MRFVDEAVIT…REIRLELKVL (159 aa)) folds into the Obg domain. The disordered stretch occupies residues 120-143 (GGEGGLGNTHFKSSTNRAPRKCTT). In terms of domain architecture, OBG-type G spans 160 to 333 (ADVGLLGMPN…VVYYLMDQIE (174 aa)). Residues 166–173 (GMPNAGKS), 191–195 (FTTMV), 213–216 (DIPG), 283–286 (NKLD), and 314–316 (SGL) each bind GTP. Serine 173 and threonine 193 together coordinate Mg(2+). Residues 381–406 (ESMMDDDDDFDDDEDDGDVESIYVRD) are disordered. The segment covering 383 to 399 (MMDDDDDFDDDEDDGDV) has biased composition (acidic residues).

It belongs to the TRAFAC class OBG-HflX-like GTPase superfamily. OBG GTPase family. In terms of assembly, monomer. The cofactor is Mg(2+).

It localises to the cytoplasm. In terms of biological role, an essential GTPase which binds GTP, GDP and possibly (p)ppGpp with moderate affinity, with high nucleotide exchange rates and a fairly low GTP hydrolysis rate. Plays a role in control of the cell cycle, stress response, ribosome biogenesis and in those bacteria that undergo differentiation, in morphogenesis control. The polypeptide is GTPase Obg (Acinetobacter baumannii (strain ACICU)).